Reading from the N-terminus, the 126-residue chain is Glycine cleavage system H protein (126 aa).

The 83-residue stretch at 22–104 (VAIIGITEYA…YEKAWMVKVE (83 aa)) folds into the Lipoyl-binding domain. An N6-lipoyllysine modification is found at Lys63.

The protein belongs to the GcvH family. In terms of assembly, the glycine cleavage system is composed of four proteins: P, T, L and H. The cofactor is (R)-lipoate.

Functionally, the glycine cleavage system catalyzes the degradation of glycine. The H protein shuttles the methylamine group of glycine from the P protein to the T protein. Is also involved in protein lipoylation via its role as an octanoyl/lipoyl carrier protein intermediate. The protein is Glycine cleavage system H protein of Staphylococcus aureus (strain USA300).